The primary structure comprises 753 residues: Translation initiation factor IF-2 (753 aa).

Positions 1-166 (MSEKPRRDTG…PVMRPRGPVA (166 aa)) are disordered. 3 stretches are compositionally biased toward low complexity: residues 19–43 (STGQ…ATGA), 71–81 (NARPAAPANAR), and 102–122 (TPAP…TNTR). The span at 133 to 146 (PQPEEREREREAVL) shows a compositional bias: basic and acidic residues. Low complexity predominate over residues 153–162 (TTTRPVMRPR). Residues 249–418 (PRPPVVTIMG…LLVADLEDLR (170 aa)) form the tr-type G domain. The segment at 258–265 (GHVDHGKT) is G1. 258–265 (GHVDHGKT) contributes to the GTP binding site. The G2 stretch occupies residues 283 to 287 (GITQH). The interval 304 to 307 (DTPG) is G3. GTP-binding positions include 304-308 (DTPGH) and 358-361 (NKID). The tract at residues 358-361 (NKID) is G4. A G5 region spans residues 394 to 396 (SAR).

It belongs to the TRAFAC class translation factor GTPase superfamily. Classic translation factor GTPase family. IF-2 subfamily.

It is found in the cytoplasm. In terms of biological role, one of the essential components for the initiation of protein synthesis. Protects formylmethionyl-tRNA from spontaneous hydrolysis and promotes its binding to the 30S ribosomal subunits. Also involved in the hydrolysis of GTP during the formation of the 70S ribosomal complex. This chain is Translation initiation factor IF-2, found in Chloroflexus aggregans (strain MD-66 / DSM 9485).